The sequence spans 1170 residues: RNA-binding protein 33 (1170 aa).

Disordered stretches follow at residues 1 to 152 (MAAA…EGHE) and 199 to 221 (KDIK…LRFK). Ala-2 bears the N-acetylalanine mark. A compositionally biased stretch (basic and acidic residues) spans 20–36 (QFDKPGAERSWRRRAAD). A compositionally biased stretch (acidic residues) spans 37-49 (EDWDSELEDDLLG). Residue Ser-41 is modified to Phosphoserine. Positions 82 to 108 (FSSQGVTISLNATSGMVTSFELSDNTN) are enriched in polar residues. Composition is skewed to acidic residues over residues 112–126 (GEQE…GEDE) and 203–214 (EESDEEEEDDEE). Residues Ser-205 and Ser-233 each carry the phosphoserine modification. Disordered regions lie at residues 259 to 708 (FEER…NSNL), 721 to 784 (MSSS…PDED), 833 to 863 (QLYA…PFPG), and 942 to 1050 (AVPQ…VPPG). Residues 267-278 (KQGRYSSRRGGR) are compositionally biased toward basic residues. Residues 289 to 306 (GDQRRESTERGRMKDHRP) show a composition bias toward basic and acidic residues. Positions 311–329 (TQPPVVPQAPPPPPPPPQQ) are enriched in pro residues. Composition is skewed to low complexity over residues 335–348 (LFQP…LPVQ), 357–372 (QGMH…RMMM), and 394–403 (TVVTPVQVPL). Positions 419-433 (FPGPPEFPQHTPGPV) are enriched in pro residues. Arg-470 bears the Asymmetric dimethylarginine mark. 3 stretches are compositionally biased toward pro residues: residues 481–490 (SPPPPPPPPT), 554–568 (FIPP…PGQP), and 582–630 (LHPP…PQHP). Over residues 632-642 (QHQHHHHHHHL) the composition is skewed to basic residues. Polar residues-rich tracts occupy residues 662 to 708 (QTAQ…NSNL) and 721 to 732 (MSSSRCSATPSA). 2 positions are modified to phosphoserine: Ser-741 and Ser-765. Positions 789–835 (LYRLKIEEQKRLREEILKQKELRRQQQAGARKKELLERLAQQQQQLY) form a coiled coil. At Ser-951 the chain carries Phosphoserine. A Glycyl lysine isopeptide (Lys-Gly) (interchain with G-Cter in SUMO2) cross-link involves residue Lys-960. Residues Ser-973 and Ser-991 each carry the phosphoserine modification. An Asymmetric dimethylarginine; alternate modification is found at Arg-1028. Position 1028 is an omega-N-methylarginine; alternate (Arg-1028). One can recognise an RRM domain in the interval 1098-1170 (CVVSVEGLSS…SHINVALIVE (73 aa)).

Associates with the NXF1-NXT1 RNA export complex. Interacts with ALKBH5; facilitating ALKBH5 recruitment to m6A-containing transcripts. Interacts with SENP1; promoting ALKBH5 deSUMOylation and subsequent activation.

It is found in the nucleus. It localises to the cytoplasm. In terms of biological role, RNA reader protein, which recognizes and binds specific RNAs, thereby regulating RNA metabolic processes, such as mRNA export, mRNA stability and/or translation. Binds a subset of intronless RNAs containing GC-rich elements, such as NORAD, and promotes their nuclear export by recruiting target RNAs to components of the NXF1-NXT1 RNA export machinery. Specifically recognizes and binds N6-methyladenosine (m6A)-containing mRNAs, promoting their demethylation by ALKBH5. Acts as an molecular adapter, which (1) promotes ALKBH5 recruitment to m6A-containing transcripts and (2) activates ALKBH5 demethylase activity by recruiting SENP1, leading to ALKBH5 deSUMOylation and subsequent activation. The protein is RNA-binding protein 33 of Homo sapiens (Human).